The following is a 247-amino-acid chain: MAQQMSARNPRYKRILLKLSGEALMGSEDFGIDPKVLDRMALEVGQLVGIGVEVGLVIGGGNLFRGAALSAAGMDRVTGDHMGMLATVMNALAMRDALERSNIPALVMSAISMVGVTDHYDRRKAMRHLKSGEVVIFSAGTGNPFFTTDSAACLRAIEIQADVVLKATKVDGVYTADPFKDPNAEKFAELTYDEVLDRKLGVMDLTAICLCRDHSMPLRVFNMNKPGALLNIVLGGAEGTLIEESNE.

Lysine 18–glycine 21 contributes to the ATP binding site. Glycine 60 provides a ligand contact to UMP. The ATP site is built by glycine 61 and arginine 65. UMP contacts are provided by residues aspartate 80 and threonine 141–threonine 148. ATP-binding residues include threonine 168, tyrosine 174, and aspartate 177.

It belongs to the UMP kinase family. In terms of assembly, homohexamer.

Its subcellular location is the cytoplasm. The enzyme catalyses UMP + ATP = UDP + ADP. The protein operates within pyrimidine metabolism; CTP biosynthesis via de novo pathway; UDP from UMP (UMPK route): step 1/1. Its activity is regulated as follows. Inhibited by UTP. In terms of biological role, catalyzes the reversible phosphorylation of UMP to UDP. This Stutzerimonas stutzeri (strain A1501) (Pseudomonas stutzeri) protein is Uridylate kinase.